Reading from the N-terminus, the 539-residue chain is Chaperonin GroEL (539 aa).

Residues 30 to 33 (TLGP), Lys51, 87 to 91 (DGTTT), Gly415, 479 to 481 (NAA), and Asp495 each bind ATP.

It belongs to the chaperonin (HSP60) family. In terms of assembly, forms a cylinder of 14 subunits composed of two heptameric rings stacked back-to-back. Interacts with the co-chaperonin GroES.

It localises to the cytoplasm. The enzyme catalyses ATP + H2O + a folded polypeptide = ADP + phosphate + an unfolded polypeptide.. In terms of biological role, together with its co-chaperonin GroES, plays an essential role in assisting protein folding. The GroEL-GroES system forms a nano-cage that allows encapsulation of the non-native substrate proteins and provides a physical environment optimized to promote and accelerate protein folding. In Enterobacter asburiae, this protein is Chaperonin GroEL.